The following is a 328-amino-acid chain: Flap endonuclease 1 (328 aa).

Positions 1–98 are N-domain; that stretch reads MGVKLRDVVS…ETVSRRADIR (98 aa). Mg(2+) is bound by residues aspartate 27, aspartate 80, glutamate 152, glutamate 154, aspartate 173, aspartate 175, and aspartate 226. An I-domain region spans residues 116-247; the sequence is RAKKYAVRSS…RGLKLIREKG (132 aa). Positions 320-328 are interaction with PCNA; that stretch reads TQKSLEDWF.

Belongs to the XPG/RAD2 endonuclease family. FEN1 subfamily. In terms of assembly, interacts with PCNA. PCNA stimulates the nuclease activity without altering cleavage specificity. Requires Mg(2+) as cofactor.

Its function is as follows. Structure-specific nuclease with 5'-flap endonuclease and 5'-3' exonuclease activities involved in DNA replication and repair. During DNA replication, cleaves the 5'-overhanging flap structure that is generated by displacement synthesis when DNA polymerase encounters the 5'-end of a downstream Okazaki fragment. Binds the unpaired 3'-DNA end and kinks the DNA to facilitate 5' cleavage specificity. Cleaves one nucleotide into the double-stranded DNA from the junction in flap DNA, leaving a nick for ligation. Also involved in the base excision repair (BER) pathway. Acts as a genome stabilization factor that prevents flaps from equilibrating into structures that lead to duplications and deletions. Also possesses 5'-3' exonuclease activity on nicked or gapped double-stranded DNA. The polypeptide is Flap endonuclease 1 (Methanothermobacter thermautotrophicus (strain ATCC 29096 / DSM 1053 / JCM 10044 / NBRC 100330 / Delta H) (Methanobacterium thermoautotrophicum)).